A 206-amino-acid polypeptide reads, in one-letter code: Large ribosomal subunit protein uL4 (206 aa).

Positions 46-77 (GTRAQKDREQVRHSTKKPFKQKGTGNARAGMT) are disordered.

Belongs to the universal ribosomal protein uL4 family. As to quaternary structure, part of the 50S ribosomal subunit.

Its function is as follows. One of the primary rRNA binding proteins, this protein initially binds near the 5'-end of the 23S rRNA. It is important during the early stages of 50S assembly. It makes multiple contacts with different domains of the 23S rRNA in the assembled 50S subunit and ribosome. Forms part of the polypeptide exit tunnel. The chain is Large ribosomal subunit protein uL4 from Paracidovorax citrulli (strain AAC00-1) (Acidovorax citrulli).